The sequence spans 465 residues: ATP synthase subunit beta (465 aa).

152–159 (GGAGVGKT) provides a ligand contact to ATP.

It belongs to the ATPase alpha/beta chains family. As to quaternary structure, F-type ATPases have 2 components, CF(1) - the catalytic core - and CF(0) - the membrane proton channel. CF(1) has five subunits: alpha(3), beta(3), gamma(1), delta(1), epsilon(1). CF(0) has three main subunits: a(1), b(2) and c(9-12). The alpha and beta chains form an alternating ring which encloses part of the gamma chain. CF(1) is attached to CF(0) by a central stalk formed by the gamma and epsilon chains, while a peripheral stalk is formed by the delta and b chains.

The protein localises to the cell inner membrane. It carries out the reaction ATP + H2O + 4 H(+)(in) = ADP + phosphate + 5 H(+)(out). Its function is as follows. Produces ATP from ADP in the presence of a proton gradient across the membrane. The catalytic sites are hosted primarily by the beta subunits. This is ATP synthase subunit beta from Campylobacter curvus (strain 525.92).